We begin with the raw amino-acid sequence, 272 residues long: Energy-coupling factor transporter ATP-binding protein EcfA1 (272 aa).

An ABC transporter domain is found at 2–237 (IKVSDVCFSY…KNIIEKAKID (236 aa)). 37 to 44 (GHNGSGKS) contributes to the ATP binding site.

It belongs to the ABC transporter superfamily. Energy-coupling factor EcfA family. As to quaternary structure, forms a stable energy-coupling factor (ECF) transporter complex composed of 2 membrane-embedded substrate-binding proteins (S component), 2 ATP-binding proteins (A component) and 2 transmembrane proteins (T component).

Its subcellular location is the cell membrane. Its function is as follows. ATP-binding (A) component of a common energy-coupling factor (ECF) ABC-transporter complex. Unlike classic ABC transporters this ECF transporter provides the energy necessary to transport a number of different substrates. In Mesomycoplasma hyopneumoniae (strain 7448) (Mycoplasma hyopneumoniae), this protein is Energy-coupling factor transporter ATP-binding protein EcfA1.